The sequence spans 294 residues: Putative sugar lactone lactonase (294 aa).

A divalent metal cation-binding residues include E21, N150, and D201. The active-site Proton donor/acceptor is the D201.

This sequence belongs to the SMP-30/CGR1 family. A divalent metal cation serves as cofactor.

Involved in the degradation of galactose via the DeLey-Doudoroff pathway. The sequence is that of Putative sugar lactone lactonase from Rhizobium meliloti (strain 1021) (Ensifer meliloti).